Reading from the N-terminus, the 1210-residue chain is Multimerin-1 (1210 aa).

The N-terminal stretch at 1-19 is a signal peptide; the sequence is MLGLKFLVLLSILWGRVFR. Residues 57–102 form a disordered region; that stretch reads ATQNPSTQGPAAAERSSEDDVLLQSTSQPSETSTPPEGRHQTPLEK. A compositionally biased stretch (low complexity) spans 80–92; that stretch reads QSTSQPSETSTPP. An N-linked (GlcNAc...) asparagine glycan is attached at Asn-133. Positions 143 to 155 are enriched in polar residues; it reads SRKSDQQEVSTKS. The segment at 143 to 190 is disordered; it reads SRKSDQQEVSTKSAGDMGNRSARETHLRRSDNSRNQRPSYQKPSFETT. Asn-161 is a glycosylation site (N-linked (GlcNAc...) asparagine). Residues 163–176 are compositionally biased toward basic and acidic residues; that stretch reads SARETHLRRSDNSR. Residues 177-189 are compositionally biased toward polar residues; sequence NQRPSYQKPSFET. The region spanning 192 to 267 is the EMI domain; the sequence is GKNWCAHVHT…PGYIGPNCQL (76 aa). Intrachain disulfides connect Cys-196–Cys-257, Cys-222–Cys-230, and Cys-256–Cys-265. Thr-201 carries O-linked (Fuc) threonine glycosylation. Thr-250 carries O-linked (Fuc) threonine glycosylation. The segment at 276-299 is disordered; that stretch reads AHSNQAESHTAVDQGRAQQQKQDC. Residues 303–338 are a coiled coil; the sequence is AMIQKLAEQLSQQERKLSLLQKKVDNASLVADDMRN. N-linked (GlcNAc...) asparagine glycosylation is found at Asn-328, Asn-415, Asn-491, Asn-525, Asn-560, Asn-602, Asn-712, Asn-765, Asn-810, Asn-822, Asn-903, Asn-915, Asn-963, and Asn-1000. Positions 564 to 690 form a coiled coil; sequence LLEMEKESAR…RHNLLRNEVQ (127 aa). The stretch at 809–846 forms a coiled coil; that stretch reads FNETTSQVNKCQQNMSHLEENMLSVTKTAKEFETRLQG. The EGF-like domain maps to 1023 to 1059; sequence EHSSCSSFPCQNGGTCISGRSNFICACRHPFMGDTCT. 3 cysteine pairs are disulfide-bonded: Cys-1027–Cys-1038, Cys-1032–Cys-1047, and Cys-1049–Cys-1058. The O-linked (Fuc) threonine glycan is linked to Thr-1037. One can recognise a C1q domain in the interval 1078 to 1210; the sequence is RYAPMVAFFV…TFSGYLLYRT (133 aa).

Multimeric. Composed of varying sized, disulfide-linked multimers, the smallest of which is a homotrimer. Proteolysis of the promultimerin in the N-terminal region, leads to the mature p155 form that is stored in platelets. Interacts with factor V/Va. Extensively N-glycosylated. In terms of processing, O-fucosylated within the EMI domain (at Thr-201 and Thr-250) by FUT10/POFUT3 and FUT11/POFUT4. O-fucosylation at Thr-201 and Thr-1037 are required for facilitating protein folding and secretion.

The protein resides in the secreted. Carrier protein for platelet (but not plasma) factor V/Va. Plays a role in the storage and stabilization of factor V in platelets. Upon release following platelet activation, may limit platelet and plasma factor Va-dependent thrombin generation. Ligand for integrin alpha-IIb/beta-3 and integrin alpha-V/beta-3 on activated platelets, and may function as an extracellular matrix or adhesive protein. The sequence is that of Multimerin-1 from Mus musculus (Mouse).